The chain runs to 271 residues: NH(3)-dependent NAD(+) synthetase (271 aa).

43-50 (GISGGQDS) is a binding site for ATP. Asp49 contributes to the Mg(2+) binding site. Deamido-NAD(+) is bound at residue Arg137. Thr157 is a binding site for ATP. Glu162 serves as a coordination point for Mg(2+). Lys170 and Asp177 together coordinate deamido-NAD(+). 2 residues coordinate ATP: Lys186 and Thr208. Position 257–258 (257–258 (HK)) interacts with deamido-NAD(+).

This sequence belongs to the NAD synthetase family. Homodimer.

It carries out the reaction deamido-NAD(+) + NH4(+) + ATP = AMP + diphosphate + NAD(+) + H(+). Its pathway is cofactor biosynthesis; NAD(+) biosynthesis; NAD(+) from deamido-NAD(+) (ammonia route): step 1/1. Functionally, catalyzes the ATP-dependent amidation of deamido-NAD to form NAD. Uses ammonia as a nitrogen source. This chain is NH(3)-dependent NAD(+) synthetase, found in Exiguobacterium sp. (strain ATCC BAA-1283 / AT1b).